Here is a 215-residue protein sequence, read N- to C-terminus: MKYITIALAKGRLAKKALEILEQIGITCDEMKDPTSRKLIFTNEELKLRFFLAKANDVPTYVEYGAADIGVVGKDTILEEGRKMYEVLDLNLGKCRMCIAGPASAKELLHHGELIRVATKYPNIAKDYFYNKKHQTVEIIKLNGSIELAPIVGLSEVIVDIVETGSTLKENGLEVLEEICPLSARVVVNQVSMKMEHERITKMINDLREVLTEAQ.

Belongs to the ATP phosphoribosyltransferase family. Short subfamily. In terms of assembly, heteromultimer composed of HisG and HisZ subunits.

It localises to the cytoplasm. The catalysed reaction is 1-(5-phospho-beta-D-ribosyl)-ATP + diphosphate = 5-phospho-alpha-D-ribose 1-diphosphate + ATP. It participates in amino-acid biosynthesis; L-histidine biosynthesis; L-histidine from 5-phospho-alpha-D-ribose 1-diphosphate: step 1/9. Its function is as follows. Catalyzes the condensation of ATP and 5-phosphoribose 1-diphosphate to form N'-(5'-phosphoribosyl)-ATP (PR-ATP). Has a crucial role in the pathway because the rate of histidine biosynthesis seems to be controlled primarily by regulation of HisG enzymatic activity. This is ATP phosphoribosyltransferase from Lachnoclostridium phytofermentans (strain ATCC 700394 / DSM 18823 / ISDg) (Clostridium phytofermentans).